A 631-amino-acid chain; its full sequence is Phosphomethylpyrimidine synthase (631 aa).

Residues asparagine 239, methionine 268, tyrosine 297, histidine 333, 353–355, 394–397, and glutamate 433 each bind substrate; these read SRG and DGLR. Histidine 437 provides a ligand contact to Zn(2+). Substrate is bound at residue tyrosine 460. Histidine 501 provides a ligand contact to Zn(2+). [4Fe-4S] cluster contacts are provided by cysteine 581, cysteine 584, and cysteine 589.

It belongs to the ThiC family. As to quaternary structure, homodimer. [4Fe-4S] cluster is required as a cofactor.

It carries out the reaction 5-amino-1-(5-phospho-beta-D-ribosyl)imidazole + S-adenosyl-L-methionine = 4-amino-2-methyl-5-(phosphooxymethyl)pyrimidine + CO + 5'-deoxyadenosine + formate + L-methionine + 3 H(+). It participates in cofactor biosynthesis; thiamine diphosphate biosynthesis. In terms of biological role, catalyzes the synthesis of the hydroxymethylpyrimidine phosphate (HMP-P) moiety of thiamine from aminoimidazole ribotide (AIR) in a radical S-adenosyl-L-methionine (SAM)-dependent reaction. The protein is Phosphomethylpyrimidine synthase of Salmonella agona (strain SL483).